The following is a 601-amino-acid chain: Aspartate--tRNA(Asp/Asn) ligase (601 aa).

An L-aspartate-binding site is contributed by Glu-187. Residues 211–214 (QQFK) are aspartate. The L-aspartate site is built by Arg-233 and His-461. Residue 233-235 (RDE) coordinates ATP. Glu-495 serves as a coordination point for ATP. Arg-502 lines the L-aspartate pocket. 547–550 (GLDR) serves as a coordination point for ATP.

This sequence belongs to the class-II aminoacyl-tRNA synthetase family. Type 1 subfamily. Homodimer.

The protein resides in the cytoplasm. It catalyses the reaction tRNA(Asx) + L-aspartate + ATP = L-aspartyl-tRNA(Asx) + AMP + diphosphate. Its function is as follows. Aspartyl-tRNA synthetase with relaxed tRNA specificity since it is able to aspartylate not only its cognate tRNA(Asp) but also tRNA(Asn). Reaction proceeds in two steps: L-aspartate is first activated by ATP to form Asp-AMP and then transferred to the acceptor end of tRNA(Asp/Asn). The polypeptide is Aspartate--tRNA(Asp/Asn) ligase (Pelodictyon phaeoclathratiforme (strain DSM 5477 / BU-1)).